Consider the following 532-residue polypeptide: Methionine--tRNA ligase (532 aa).

A 'HIGH' region motif is present at residues 16 to 26 (YYVNDVPHLGS). 4 residues coordinate Zn(2+): C131, C134, C149, and H152. Residues 305–309 (KMGKS) carry the 'KMSKS' region motif. Residue K308 participates in ATP binding.

It belongs to the class-I aminoacyl-tRNA synthetase family. MetG type 2A subfamily. As to quaternary structure, monomer. Zn(2+) serves as cofactor.

Its subcellular location is the cytoplasm. It catalyses the reaction tRNA(Met) + L-methionine + ATP = L-methionyl-tRNA(Met) + AMP + diphosphate. Functionally, is required not only for elongation of protein synthesis but also for the initiation of all mRNA translation through initiator tRNA(fMet) aminoacylation. This is Methionine--tRNA ligase (metG) from Synechocystis sp. (strain ATCC 27184 / PCC 6803 / Kazusa).